Here is a 311-residue protein sequence, read N- to C-terminus: Cytosolic Fe-S cluster assembly factor Nubp1 homolog (311 aa).

The segment at Met-1 to Ser-21 is disordered. [4Fe-4S] cluster contacts are provided by Cys-9, Cys-23, Cys-26, and Cys-32. An ATP-binding site is contributed by Gly-63–Ser-70. [4Fe-4S] cluster-binding residues include Cys-240 and Cys-243.

The protein belongs to the Mrp/NBP35 ATP-binding proteins family. NUBP1/NBP35 subfamily. As to quaternary structure, heterotetramer of 2 Nubp1 and 2 Nubp2 chains. It depends on [4Fe-4S] cluster as a cofactor.

It is found in the cytoplasm. Functionally, component of the cytosolic iron-sulfur (Fe/S) protein assembly (CIA) machinery. Required for maturation of extramitochondrial Fe-S proteins. The Nubp1-Nubp2 heterotetramer forms a Fe-S scaffold complex, mediating the de novo assembly of an Fe-S cluster and its transfer to target apoproteins. In Drosophila melanogaster (Fruit fly), this protein is Cytosolic Fe-S cluster assembly factor Nubp1 homolog.